Here is a 176-residue protein sequence, read N- to C-terminus: Isopentenyl-diphosphate Delta-isomerase (176 aa).

Mn(2+)-binding residues include histidine 23 and histidine 29. The Nudix hydrolase domain occupies 27–161 (LRHLAISVFV…PERFTPWLKI (135 aa)). Cysteine 63 is an active-site residue. Cysteine 63 is a binding site for Mg(2+). A Mn(2+)-binding site is contributed by histidine 65. Mg(2+) is bound at residue glutamate 83. Glutamate 109 and glutamate 111 together coordinate Mn(2+). Glutamate 111 is a catalytic residue.

This sequence belongs to the IPP isomerase type 1 family. Mg(2+) serves as cofactor. Requires Mn(2+) as cofactor.

The protein localises to the cytoplasm. The enzyme catalyses isopentenyl diphosphate = dimethylallyl diphosphate. Its pathway is isoprenoid biosynthesis; dimethylallyl diphosphate biosynthesis; dimethylallyl diphosphate from isopentenyl diphosphate: step 1/1. The protein operates within porphyrin-containing compound metabolism; chlorophyll biosynthesis. Catalyzes the 1,3-allylic rearrangement of the homoallylic substrate isopentenyl (IPP) to its highly electrophilic allylic isomer, dimethylallyl diphosphate (DMAPP). In Rhodobacter capsulatus (strain ATCC BAA-309 / NBRC 16581 / SB1003), this protein is Isopentenyl-diphosphate Delta-isomerase.